A 421-amino-acid chain; its full sequence is 3-isopropylmalate dehydratase large subunit (421 aa).

[4Fe-4S] cluster contacts are provided by Cys300, Cys360, and Cys363.

Belongs to the aconitase/IPM isomerase family. LeuC type 2 subfamily. Heterodimer of LeuC and LeuD. [4Fe-4S] cluster serves as cofactor.

The catalysed reaction is (2R,3S)-3-isopropylmalate = (2S)-2-isopropylmalate. It participates in amino-acid biosynthesis; L-leucine biosynthesis; L-leucine from 3-methyl-2-oxobutanoate: step 2/4. Its function is as follows. Catalyzes the isomerization between 2-isopropylmalate and 3-isopropylmalate, via the formation of 2-isopropylmaleate. This Thermodesulfovibrio yellowstonii (strain ATCC 51303 / DSM 11347 / YP87) protein is 3-isopropylmalate dehydratase large subunit.